The chain runs to 773 residues: Endonuclease MutS2 (773 aa).

Position 334–341 (Gly-334–Thr-341) interacts with ATP. In terms of domain architecture, Smr spans Val-698–Lys-773.

It belongs to the DNA mismatch repair MutS family. MutS2 subfamily. In terms of assembly, homodimer. Binds to stalled ribosomes, contacting rRNA.

Endonuclease that is involved in the suppression of homologous recombination and thus may have a key role in the control of bacterial genetic diversity. Its function is as follows. Acts as a ribosome collision sensor, splitting the ribosome into its 2 subunits. Detects stalled/collided 70S ribosomes which it binds and splits by an ATP-hydrolysis driven conformational change. Acts upstream of the ribosome quality control system (RQC), a ribosome-associated complex that mediates the extraction of incompletely synthesized nascent chains from stalled ribosomes and their subsequent degradation. Probably generates substrates for RQC. In Solidesulfovibrio magneticus (strain ATCC 700980 / DSM 13731 / RS-1) (Desulfovibrio magneticus), this protein is Endonuclease MutS2.